The following is a 318-amino-acid chain: Putative S-adenosyl-L-methionine-dependent methyltransferase BCG_0781c (318 aa).

S-adenosyl-L-methionine-binding positions include aspartate 135 and 164-165 (DL).

Belongs to the UPF0677 family.

In terms of biological role, exhibits S-adenosyl-L-methionine-dependent methyltransferase activity. In Mycobacterium bovis (strain BCG / Pasteur 1173P2), this protein is Putative S-adenosyl-L-methionine-dependent methyltransferase BCG_0781c.